The following is a 372-amino-acid chain: Protein-glutamate methylesterase/protein-glutamine glutaminase (372 aa).

The Response regulatory domain maps to 5 to 123 (RVLIVDDSAL…SANLTTVSET (119 aa)). Asp-56 carries the post-translational modification 4-aspartylphosphate. The segment covering 140 to 151 (GTRSTDTTNSFS) has biased composition (polar residues). The disordered stretch occupies residues 140-177 (GTRSTDTTNSFSEPFKSTIPKPMTAAEPQKEEKPTPQR). The span at 167-177 (PQKEEKPTPQR) shows a compositional bias: basic and acidic residues. A CheB-type methylesterase domain is found at 178-364 (EHGNIQIIAI…VSLDNMAAAI (187 aa)). Active-site residues include Ser-190, His-217, and Asp-313.

The protein belongs to the CheB family. Post-translationally, phosphorylated by CheA. Phosphorylation of the N-terminal regulatory domain activates the methylesterase activity.

It localises to the cytoplasm. The enzyme catalyses [protein]-L-glutamate 5-O-methyl ester + H2O = L-glutamyl-[protein] + methanol + H(+). It carries out the reaction L-glutaminyl-[protein] + H2O = L-glutamyl-[protein] + NH4(+). In terms of biological role, involved in chemotaxis. Part of a chemotaxis signal transduction system that modulates chemotaxis in response to various stimuli. Catalyzes the demethylation of specific methylglutamate residues introduced into the chemoreceptors (methyl-accepting chemotaxis proteins or MCP) by CheR. Also mediates the irreversible deamidation of specific glutamine residues to glutamic acid. This is Protein-glutamate methylesterase/protein-glutamine glutaminase from Treponema denticola (strain ATCC 35405 / DSM 14222 / CIP 103919 / JCM 8153 / KCTC 15104).